Here is a 78-residue protein sequence, read N- to C-terminus: Large ribosomal subunit protein eL38 (78 aa).

The protein belongs to the eukaryotic ribosomal protein eL38 family.

This chain is Large ribosomal subunit protein eL38 (RpL38), found in Maconellicoccus hirsutus (Pink hibiscus mealybug).